Consider the following 248-residue polypeptide: Type II restriction enzyme XhoI (248 aa).

The protein belongs to the XhoI type II restriction endonuclease family.

The enzyme catalyses Endonucleolytic cleavage of DNA to give specific double-stranded fragments with terminal 5'-phosphates.. A P subtype restriction enzyme that recognizes the double-stranded sequence 5'-CTCGAG-3' and cleaves after C-1. This is Type II restriction enzyme XhoI from Xanthomonas vasicola.